A 1059-amino-acid polypeptide reads, in one-letter code: Ubiquitin carboxyl-terminal hydrolase 36 (1059 aa).

2 disordered regions span residues 22–45 and 102–145; these read LGGNSSAGSSTDQAKSGEDTNGSL and GKLV…KPKR. The span at 23–45 shows a compositional bias: polar residues; sequence GGNSSAGSSTDQAKSGEDTNGSL. Positions 121-138 are enriched in low complexity; it reads HPNNQSHHNHPHPTSNPN. A USP domain is found at 168–457; sequence TGMINVGNTC…NAYIMFFELD (290 aa). Cys177 functions as the Nucleophile in the catalytic mechanism. His416 functions as the Proton acceptor in the catalytic mechanism. Disordered regions lie at residues 464 to 512, 554 to 853, 941 to 1005, and 1022 to 1059; these read PPAN…YTNG, ATSA…VTSN, RQRD…FYNQ, and FGGAGSAKFQQQRALQRHLSAGGGFSRRQPSAQQQQQT. 2 stretches are compositionally biased toward low complexity: residues 479–494 and 561–580; these read STTPVPAATVSSPSPT and NGNKSSSPSSNSSSNHKSIN. Ser490 and Ser492 each carry phosphoserine. Residues 603 to 615 show a composition bias toward polar residues; sequence TTAQLPSMPNMTE. Residues Thr632 and Thr636 each carry the phosphothreonine modification. Residues Ser646 and Ser648 each carry the phosphoserine modification. Over residues 673–702 the composition is skewed to polar residues; sequence ESGQTNGHSKTNGSLTNGSASSSVHVNNSK. A compositionally biased stretch (basic and acidic residues) spans 703-720; that stretch reads QKTDAIDEIFKSLKKSAD. Residue Ser721 is modified to Phosphoserine. Acidic residues predominate over residues 721–730; that stretch reads SEEDDDEEEP. Residues 740 to 750 show a composition bias toward low complexity; the sequence is PQKQSQSQSKA. Residues 751–760 are compositionally biased toward pro residues; that stretch reads PPSPKTPPSP. Ser753 carries the post-translational modification Phosphoserine. Position 756 is a phosphothreonine (Thr756). Ser759 bears the Phosphoserine mark. The segment covering 779–788 has biased composition (acidic residues); sequence DAIDDDDDAV. Position 799 is a phosphothreonine (Thr799). The segment covering 806 to 818 has biased composition (polar residues); it reads NPFSSSKPSTDSP. Residue Ser817 is modified to Phosphoserine. At Thr820 the chain carries Phosphothreonine. Polar residues predominate over residues 833–853; sequence ALKSHQQPRVGNGYQSNVTSN. Low complexity predominate over residues 963–974; sequence SGSAKGNNASNS.

It belongs to the peptidase C19 family. As to quaternary structure, interacts with atms/PAF1, but not with CycT.

The protein localises to the nucleus. Its subcellular location is the nucleolus. The enzyme catalyses Thiol-dependent hydrolysis of ester, thioester, amide, peptide and isopeptide bonds formed by the C-terminal Gly of ubiquitin (a 76-residue protein attached to proteins as an intracellular targeting signal).. Functionally, required for maintaining multiple types of adult stem cells, including male and female germline, epithelial follicle cell and intestinal stem cells. May function as a transcriptional repressor by continually deubiquiting histone H2B at the promoters of genes critical for cellular differentiation, thereby preventing histone H3 'Lys-4' trimethylation (H3K4). Controls selective autophagy activation by ubiquitinated proteins. In Drosophila sechellia (Fruit fly), this protein is Ubiquitin carboxyl-terminal hydrolase 36 (Usp36).